Consider the following 311-residue polypeptide: MYVHLALILGCWTVVLQGAETDVGERADNRRPIWNLAHMVNAVKQIPTFLDLGANALEADVTFKGSVPTYTYHGTPCDFGRDCIRWEYFNVFLKTLREYTTPGNAKYRDGFILFVLDLKTGSLSNDQVRPAGENVAKELLQNYWNNGNNGGRAYVVLSLPDIGHYEFVRGFKEVLKKEGHEDLLEKVGYDFSGPYLPSLPTLDATHEAYKKAGVDGHIWLSDGLTNFSPLGDMARLKEAIKSRDSANGFINKIYYWSVDKYSTTRTALDVGVDGIMTNYPNVLIDVLNEDGYKDNYRLATYDDNPWETYKK.

An N-terminal signal peptide occupies residues 1–21 (MYVHLALILGCWTVVLQGAET). The propeptide occupies 22–26 (DVGER). The active site involves H38. Mg(2+)-binding residues include E58 and D60. Catalysis depends on H73, which acts as the Nucleophile. Residues C77 and C83 are joined by a disulfide bond. Position 117 (D117) interacts with Mg(2+).

The protein belongs to the arthropod phospholipase D family. Class I subfamily. The cofactor is Mg(2+). As to expression, expressed by the venom gland.

It is found in the secreted. It carries out the reaction an N-(acyl)-sphingosylphosphocholine = an N-(acyl)-sphingosyl-1,3-cyclic phosphate + choline. The enzyme catalyses an N-(acyl)-sphingosylphosphoethanolamine = an N-(acyl)-sphingosyl-1,3-cyclic phosphate + ethanolamine. It catalyses the reaction a 1-acyl-sn-glycero-3-phosphocholine = a 1-acyl-sn-glycero-2,3-cyclic phosphate + choline. The catalysed reaction is a 1-acyl-sn-glycero-3-phosphoethanolamine = a 1-acyl-sn-glycero-2,3-cyclic phosphate + ethanolamine. With respect to regulation, catalytic activity and hemolysis are inhibited by divalent ion chelators (1,10-phenanthroline, EDTA, and EGTA). In terms of biological role, dermonecrotic toxins cleave the phosphodiester linkage between the phosphate and headgroup of certain phospholipids (sphingolipid and lysolipid substrates), forming an alcohol (often choline) and a cyclic phosphate. This toxin acts on sphingomyelin (SM). It may also act on ceramide phosphoethanolamine (CPE), lysophosphatidylcholine (LPC) and lysophosphatidylethanolamine (LPE), but not on lysophosphatidylserine (LPS), and lysophosphatidylglycerol (LPG). It acts by transphosphatidylation, releasing exclusively cyclic phosphate products as second products. Shows complement-dependent hemolysis. Also induces dermonecrosis, vascular permeability, edema, inflammatory response, and platelet aggregation. In Loxosceles laeta (South American recluse spider), this protein is Dermonecrotic toxin.